The primary structure comprises 101 residues: RNA-binding protein Hfq (101 aa).

The Sm domain maps to 9-68 (DPFLNALRRERVPVSIYLVNGIKLQGQIESFDQFVILLKNTVSQMVYKHAISTVVPSRPV). The interval 63–101 (VPSRPVSHHNNNPSGGSSNYHHGSTPASQPSQPESDDAE) is disordered. A compositionally biased stretch (low complexity) spans 70-86 (HHNNNPSGGSSNYHHGS).

The protein belongs to the Hfq family. As to quaternary structure, homohexamer.

In terms of biological role, RNA chaperone that binds small regulatory RNA (sRNAs) and mRNAs to facilitate mRNA translational regulation in response to envelope stress, environmental stress and changes in metabolite concentrations. Also binds with high specificity to tRNAs. The sequence is that of RNA-binding protein Hfq from Sodalis glossinidius (strain morsitans).